A 69-amino-acid chain; its full sequence is UPF0337 protein RB0906 (69 aa).

This sequence belongs to the UPF0337 (CsbD) family.

This Rhizobium meliloti (strain 1021) (Ensifer meliloti) protein is UPF0337 protein RB0906.